A 394-amino-acid polypeptide reads, in one-letter code: Shematrin-like protein 2 (394 aa).

A signal peptide spans 1–19 (MKPFISLASLIVLIASASA).

Prismatic layer of shell (at protein level). Expressed primarily in the mantle with highest level in the mantle edge and lower level in the mantle pallium.

It is found in the secreted. The protein is Shematrin-like protein 2 of Pinctada maxima (Silver-lipped pearl oyster).